We begin with the raw amino-acid sequence, 120 residues long: Aspartate 1-decarboxylase (120 aa).

Ser-24 functions as the Schiff-base intermediate with substrate; via pyruvic acid in the catalytic mechanism. Ser-24 carries the pyruvic acid (Ser) modification. Residue Thr-56 participates in substrate binding. Tyr-57 serves as the catalytic Proton donor. 70–72 is a binding site for substrate; that stretch reads GAA.

Belongs to the PanD family. As to quaternary structure, heterooctamer of four alpha and four beta subunits. It depends on pyruvate as a cofactor. Is synthesized initially as an inactive proenzyme, which is activated by self-cleavage at a specific serine bond to produce a beta-subunit with a hydroxyl group at its C-terminus and an alpha-subunit with a pyruvoyl group at its N-terminus.

It is found in the cytoplasm. It carries out the reaction L-aspartate + H(+) = beta-alanine + CO2. The protein operates within cofactor biosynthesis; (R)-pantothenate biosynthesis; beta-alanine from L-aspartate: step 1/1. Functionally, catalyzes the pyruvoyl-dependent decarboxylation of aspartate to produce beta-alanine. The sequence is that of Aspartate 1-decarboxylase from Pyrobaculum islandicum (strain DSM 4184 / JCM 9189 / GEO3).